Consider the following 492-residue polypeptide: MCMEAEPPSPPAQQQEQVNPPLCKAQNPKPARLYRLVLLFVAGSLAAWTFHALSSTNLVWKLRQLHHLPTAHYLQTRDEFALYSVEELNAFKEFYDKSVSDSVGASYTEAEQTNIKEALGALRMAQDLYLAGKDDKAARLFEHALALAPRHPEVLLRYGEFLEHNQRNIVLADQYYFQALTISPSNSEALANRQRTADVVQSLDERRLESLDSKRDALSAIHESNGALRRAKKEAYFQHIYHSVGIEGNTMTLAQTRSILETRMAVDGKSIDEHNEILGMDLAMKYINASLVQKIDITIKDILELHRRVLGHVDPIEGGEFRRNQVYVGGHIPPGPGDLALLMQRFERWLNSEHSSTLHPVNYAALAHYKLVHIHPFVDGNGRTSRLLMNTLLMRAGYPPVIIPKQQRSKYYHFLKLANEGDIRPFVRFIADCTEKTLDLYLWATSDLPQQIPMLIQTESEAGERLAQMQSPNVAQRSSILEFYESGSGDIP.

A compositionally biased stretch (low complexity) spans 1–17 (MCMEAEPPSPPAQQQEQ). Residues 1–21 (MCMEAEPPSPPAQQQEQVNPP) are disordered. The helical transmembrane segment at 33 to 55 (LYRLVLLFVAGSLAAWTFHALSS) threads the bilayer. TPR repeat units lie at residues 118–151 (ALGA…APRH) and 152–186 (PEVL…SPSN). Residues 243–248 (SVGIEG) carry the Inhibitory (S/T)XXXE(G/N) motif motif. Residues glutamate 247 and 328-331 (VGGH) each bind ATP. The Fido domain maps to 297-432 (ITIKDILELH…IRPFVRFIAD (136 aa)). Residue histidine 375 is part of the active site. Residues 379–386 (DGNGRTSR), 411–412 (YY), and asparagine 419 contribute to the ATP site.

The protein belongs to the fic family. In terms of assembly, homodimer.

The protein localises to the membrane. The enzyme catalyses L-tyrosyl-[protein] + ATP = O-(5'-adenylyl)-L-tyrosyl-[protein] + diphosphate. It catalyses the reaction L-threonyl-[protein] + ATP = 3-O-(5'-adenylyl)-L-threonyl-[protein] + diphosphate. It carries out the reaction 3-O-(5'-adenylyl)-L-threonyl-[protein] + H2O = L-threonyl-[protein] + AMP + H(+). Its activity is regulated as follows. The side chain of Glu-247 determines which of the two opposing activities (AMPylase or de-AMPylase) will take place. In response to endoplasmic reticulum stress, mediates de-AMPylase activity. Adenylyltransferase activity is inhibited by the inhibitory helix present at the N-terminus: Glu-247 binds ATP and competes with ATP-binding at Arg-386, thereby preventing adenylyltransferase activity. In unstressed cells, disengagement of Glu-247 promotes adenylyltransferase activity. Activation dissociates ATP-binding from Glu-247, allowing ordered binding of the entire ATP moiety with the alpha-phosphate in an orientation that is productive for accepting an incoming target hydroxyl side chain. Protein that can both mediate the addition of adenosine 5'-monophosphate (AMP) to specific residues of target proteins (AMPylation), and the removal of the same modification from target proteins (de-AMPylation), depending on the context. The side chain of Glu-247 determines which of the two opposing activities (AMPylase or de-AMPylase) will take place. Acts as a key regulator of the unfolded protein response (UPR) by mediating AMPylation or de-AMPylation of Hsc70-3/BiP. In unstressed cells, acts as an adenylyltransferase by mediating AMPylation of Hsc70-3/BiP at 'Thr-518', thereby inactivating it. In response to endoplasmic reticulum stress, acts as a phosphodiesterase by mediating removal of ATP (de-AMPylation) from Hsc70-3/BiP at 'Thr-518', leading to restore HSPA5/BiP activity. The polypeptide is Protein adenylyltransferase Fic (Drosophila simulans (Fruit fly)).